The following is a 148-amino-acid chain: Large ribosomal subunit protein uL15 (148 aa).

A compositionally biased stretch (basic and acidic residues) spans 1-11; the sequence is MSEPIKLHDLR. The segment at 1–52 is disordered; that stretch reads MSEPIKLHDLRPAAGSNKAKTRVGRGEASKGKTAGRGTKGTKARKQVSAAFE.

The protein belongs to the universal ribosomal protein uL15 family. In terms of assembly, part of the 50S ribosomal subunit.

Functionally, binds to the 23S rRNA. In Corynebacterium glutamicum (strain R), this protein is Large ribosomal subunit protein uL15.